The chain runs to 305 residues: Recombination-associated protein RdgC (305 aa).

Belongs to the RdgC family.

Its subcellular location is the cytoplasm. It localises to the nucleoid. Functionally, may be involved in recombination. The chain is Recombination-associated protein RdgC from Sodalis glossinidius (strain morsitans).